The following is a 275-amino-acid chain: Thioredoxin-like 1-1, chloroplastic (275 aa).

Residues 1–72 constitute a chloroplast transit peptide; the sequence is MTEVISKTSL…GDSQDESFRR (72 aa). Positions 73-206 constitute a Thioredoxin domain; sequence SSAITAQTTL…FRDALAKHGP (134 aa). Catalysis depends on nucleophile residues C129 and C132. A disulfide bridge links C129 with C132. A disordered region spans residues 238–275; sequence KPVPVEKEAATPDSNPSLPVPLPSMSSNDEKTLVSAGR. Positions 249 to 264 are enriched in low complexity; sequence PDSNPSLPVPLPSMSS.

This sequence belongs to the thioredoxin family.

It is found in the plastid. Its subcellular location is the chloroplast. Functionally, thiol-disulfide oxidoreductase that may participate in various redox reactions. Possesses insulin disulfide bonds reducing activity. The chain is Thioredoxin-like 1-1, chloroplastic from Arabidopsis thaliana (Mouse-ear cress).